A 123-amino-acid polypeptide reads, in one-letter code: Large ribosomal subunit protein uL14 (123 aa).

Belongs to the universal ribosomal protein uL14 family. As to quaternary structure, part of the 50S ribosomal subunit. Forms a cluster with proteins L3 and L19. In the 70S ribosome, L14 and L19 interact and together make contacts with the 16S rRNA in bridges B5 and B8.

Binds to 23S rRNA. Forms part of two intersubunit bridges in the 70S ribosome. This is Large ribosomal subunit protein uL14 from Histophilus somni (strain 129Pt) (Haemophilus somnus).